The chain runs to 491 residues: MARAACLLRAISRALLLPLPLLLLLLLLLPPQLMARARPPENHRHRPVKRVPQLLPAALPNSLPSVPASHWVPGPASSSRPLRCGVPDPPDVLNARNRQKRFVLSGGRWEKTDLTYRILRFPWQLVREQVRQTVAEALRVWSEVTPLTFTEVHEGRADIMIDFTRYWHGDNLPFDGPGGILAHAFFPKTHREGDVHFDYDETWTIGDKGTDLLQVAAHEFGHVLGLQHTTAAKALMSPFYTFRYPLSLSPDDRRGIQHLYGRPQLTPTSPTPTLSSQAGTDTNEIALQEPEVPPEVCETSFDAVSTIRGELFFFKAGFVWRLRSGQLQPGYPALASRHWQGLPSPVDAAFEDAQGQIWFFQGAQYWVYDGEKPVLGPAPLSKLGLQGSPVHAALVWGPEKNKIYFFRGGDYWRFHPRTQRVDNPVPRRTTDWRGVPSEIDAAFQDAEGYAYFLRGHLYWKFDPVKVKVLESFPRPIGPDFFDCAEPANTFR.

The N-terminal stretch at 1 to 35 is a signal peptide; it reads MARAACLLRAISRALLLPLPLLLLLLLLLPPQLMA. A propeptide spans 36–101 (activation peptide); the sequence is RARPPENHRH…VLNARNRQKR (66 aa). A Cysteine switch motif is present at residues 82–89; it reads LRCGVPDP. Residues Cys84, His168, and Asp170 each contribute to the Zn(2+) site. Ca(2+) contacts are provided by Asp175, Gly176, Gly178, and Ile180. Residues His183, His196, and His218 each contribute to the Zn(2+) site. Residue Glu219 is part of the active site. 2 residues coordinate Zn(2+): His222 and His228. The tract at residues 260 to 279 is disordered; sequence YGRPQLTPTSPTPTLSSQAG. Over residues 263-277 the composition is skewed to low complexity; the sequence is PQLTPTSPTPTLSSQ. Residues Cys297 and Cys483 are joined by a disulfide bond. Hemopexin repeat units follow at residues 298–342, 343–385, 387–435, and 436–483; these read ETSF…WQGL, PSPV…KLGL, GSPV…WRGV, and PSEI…FFDC.

Belongs to the peptidase M10A family. Ca(2+) serves as cofactor. Requires Zn(2+) as cofactor. Post-translationally, the precursor is cleaved by a furin endopeptidase. In terms of tissue distribution, highly expressed in ovary and uterus.

The protein resides in the secreted. It localises to the extracellular space. The protein localises to the extracellular matrix. Functionally, may play an important role in the progression of epithelial malignancies. The chain is Stromelysin-3 (Mmp11) from Rattus norvegicus (Rat).